A 214-amino-acid polypeptide reads, in one-letter code: Adenylate kinase (214 aa).

10–15 (GAGKGT) is an ATP binding site. The interval 30 to 59 (STGDMLRAAIKAGTELGLKAKAVMDAGQLV) is NMP. Residues Thr31, Arg36, 57–59 (QLV), 85–88 (GFPR), and Gln92 contribute to the AMP site. The interval 122-159 (GRRVHSGSGRTYHVVFNPPKVEGKDDVTGEDLVIRADD) is LID. ATP-binding positions include Arg123 and 132–133 (TY). AMP-binding residues include Arg156 and Arg167. ATP is bound at residue Gln200.

This sequence belongs to the adenylate kinase family. In terms of assembly, monomer.

It is found in the cytoplasm. It catalyses the reaction AMP + ATP = 2 ADP. It participates in purine metabolism; AMP biosynthesis via salvage pathway; AMP from ADP: step 1/1. Functionally, catalyzes the reversible transfer of the terminal phosphate group between ATP and AMP. Plays an important role in cellular energy homeostasis and in adenine nucleotide metabolism. The polypeptide is Adenylate kinase (Aeromonas hydrophila subsp. hydrophila (strain ATCC 7966 / DSM 30187 / BCRC 13018 / CCUG 14551 / JCM 1027 / KCTC 2358 / NCIMB 9240 / NCTC 8049)).